A 430-amino-acid polypeptide reads, in one-letter code: Long-chain specific acyl-CoA dehydrogenase, mitochondrial (430 aa).

The N-terminal 30 residues, 1–30, are a transit peptide targeting the mitochondrion; it reads MAARLLLRSLRVLKARSAPRPPPSARCSHS. The segment at 17-39 is disordered; that stretch reads SAPRPPPSARCSHSGAEARLETP. The residue at position 42 (Lys42) is an N6-acetyllysine. Phosphoserine occurs at positions 54 and 55. An N6-acetyllysine; alternate mark is found at Lys66 and Lys81. An N6-succinyllysine; alternate mark is found at Lys66 and Lys81. Lys92 and Lys95 each carry N6-acetyllysine. An N6-succinyllysine modification is found at Lys165. 170–179 is a binding site for FAD; it reads IAMTEPGAGS. Residue Ser179 participates in substrate binding. A Phosphoserine modification is found at Ser191. 203–205 is an FAD binding site; that stretch reads FIT. 227-228 lines the substrate pocket; that stretch reads AH. Residue Lys240 is modified to N6-succinyllysine. 2 positions are modified to N6-acetyllysine; alternate: Lys254 and Lys279. 2 positions are modified to N6-succinyllysine; alternate: Lys254 and Lys279. Substrate is bound by residues Tyr282 and 289-292; that span reads PQER. The Proton acceptor role is filled by Glu291. FAD is bound at residue Arg317. Lys318 carries the post-translational modification N6-acetyllysine. Lys322 is modified (N6-acetyllysine; alternate). At Lys322 the chain carries N6-succinyllysine; alternate. Gln328 contacts FAD. Lys358 carries the post-translational modification N6-acetyllysine. Phosphoserine is present on Ser362. An FAD-binding site is contributed by 385 to 389; that stretch reads QLHGG. 412–413 is a binding site for substrate; that stretch reads GG. 414–416 serves as a coordination point for FAD; it reads TNE.

Belongs to the acyl-CoA dehydrogenase family. In terms of assembly, homotetramer. FAD serves as cofactor. In terms of processing, acetylation at Lys-318 and Lys-322 in proximity of the cofactor-binding sites strongly reduces catalytic activity. These sites are deacetylated by SIRT3. As to expression, expressed in heart, skeletal muscle, kidney, and brain. Expressed in liver (at protein level).

The protein localises to the mitochondrion matrix. It carries out the reaction a long-chain 2,3-saturated fatty acyl-CoA + oxidized [electron-transfer flavoprotein] + H(+) = a long-chain (2E)-enoyl-CoA + reduced [electron-transfer flavoprotein]. The enzyme catalyses oxidized [electron-transfer flavoprotein] + hexadecanoyl-CoA + H(+) = (2E)-hexadecenoyl-CoA + reduced [electron-transfer flavoprotein]. The catalysed reaction is hexanoyl-CoA + oxidized [electron-transfer flavoprotein] + H(+) = (2E)-hexenoyl-CoA + reduced [electron-transfer flavoprotein]. It catalyses the reaction octanoyl-CoA + oxidized [electron-transfer flavoprotein] + H(+) = (2E)-octenoyl-CoA + reduced [electron-transfer flavoprotein]. It carries out the reaction decanoyl-CoA + oxidized [electron-transfer flavoprotein] + H(+) = (2E)-decenoyl-CoA + reduced [electron-transfer flavoprotein]. The enzyme catalyses dodecanoyl-CoA + oxidized [electron-transfer flavoprotein] + H(+) = (2E)-dodecenoyl-CoA + reduced [electron-transfer flavoprotein]. The catalysed reaction is tetradecanoyl-CoA + oxidized [electron-transfer flavoprotein] + H(+) = (2E)-tetradecenoyl-CoA + reduced [electron-transfer flavoprotein]. It catalyses the reaction octadecanoyl-CoA + oxidized [electron-transfer flavoprotein] + H(+) = (2E)-octadecenoyl-CoA + reduced [electron-transfer flavoprotein]. It carries out the reaction eicosanoyl-CoA + oxidized [electron-transfer flavoprotein] + H(+) = (2E)-eicosenoyl-CoA + reduced [electron-transfer flavoprotein]. The enzyme catalyses docosanoyl-CoA + oxidized [electron-transfer flavoprotein] + H(+) = (2E)-docosenoyl-CoA + reduced [electron-transfer flavoprotein]. The catalysed reaction is tetracosanoyl-CoA + oxidized [electron-transfer flavoprotein] + H(+) = (2E)-tetracosenoyl-CoA + reduced [electron-transfer flavoprotein]. It catalyses the reaction (5E)-tetradecenoyl-CoA + oxidized [electron-transfer flavoprotein] + H(+) = (2E,5E)-tetradecadienoyl-CoA + reduced [electron-transfer flavoprotein]. It carries out the reaction (5Z)-tetradecenoyl-CoA + oxidized [electron-transfer flavoprotein] + H(+) = (2E,5Z)-tetradecadienoyl-CoA + reduced [electron-transfer flavoprotein]. The enzyme catalyses oxidized [electron-transfer flavoprotein] + (9Z)-octadecenoyl-CoA + H(+) = (2E,9Z)-octadecadienoyl-CoA + reduced [electron-transfer flavoprotein]. It participates in lipid metabolism; mitochondrial fatty acid beta-oxidation. Functionally, long-chain specific acyl-CoA dehydrogenase is one of the acyl-CoA dehydrogenases that catalyze the first step of mitochondrial fatty acid beta-oxidation, an aerobic process breaking down fatty acids into acetyl-CoA and allowing the production of energy from fats. The first step of fatty acid beta-oxidation consists in the removal of one hydrogen from C-2 and C-3 of the straight-chain fatty acyl-CoA thioester, resulting in the formation of trans-2-enoyl-CoA. Among the different mitochondrial acyl-CoA dehydrogenases, long-chain specific acyl-CoA dehydrogenase can act on saturated and unsaturated acyl-CoAs with 6 to 24 carbons with a preference for 8 to 18 carbons long primary chains. This is Long-chain specific acyl-CoA dehydrogenase, mitochondrial from Mus musculus (Mouse).